A 313-amino-acid chain; its full sequence is tRNA dimethylallyltransferase (313 aa).

ATP is bound at residue 20-27 (GPTGTGKS). 22–27 (TGTGKS) serves as a coordination point for substrate.

It belongs to the IPP transferase family. In terms of assembly, monomer. The cofactor is Mg(2+).

It carries out the reaction adenosine(37) in tRNA + dimethylallyl diphosphate = N(6)-dimethylallyladenosine(37) in tRNA + diphosphate. Functionally, catalyzes the transfer of a dimethylallyl group onto the adenine at position 37 in tRNAs that read codons beginning with uridine, leading to the formation of N6-(dimethylallyl)adenosine (i(6)A). The sequence is that of tRNA dimethylallyltransferase from Kocuria rhizophila (strain ATCC 9341 / DSM 348 / NBRC 103217 / DC2201).